Consider the following 114-residue polypeptide: Large ribosomal subunit protein bL19 (114 aa).

Belongs to the bacterial ribosomal protein bL19 family.

Functionally, this protein is located at the 30S-50S ribosomal subunit interface and may play a role in the structure and function of the aminoacyl-tRNA binding site. The polypeptide is Large ribosomal subunit protein bL19 (Acidithiobacillus ferrooxidans (strain ATCC 23270 / DSM 14882 / CIP 104768 / NCIMB 8455) (Ferrobacillus ferrooxidans (strain ATCC 23270))).